Here is a 1139-residue protein sequence, read N- to C-terminus: Ras GTPase-activating protein nGAP (1139 aa).

Positions 1–87 are disordered; it reads MQTPEVPAER…SRGLPKLKES (87 aa). At serine 16 the chain carries Phosphoserine. Positions 17-36 are enriched in polar residues; that stretch reads ISGTSTSEKPNSMDTANTSP. One can recognise a PH domain in the interval 41–158; the sequence is GFFSKRLKGS…WMENLRRTVQ (118 aa). Residues 45–56 are compositionally biased toward basic residues; the sequence is KRLKGSIKRTKS. The segment covering 73-87 has biased composition (basic and acidic residues); sequence STDDRSRGLPKLKES. Serine 89 bears the Phosphoserine mark. Residues 149–267 enclose the C2 domain; it reads WMENLRRTVQ…TGRQFVEKWY (119 aa). Residues 343-551 form the Ras-GAP domain; sequence GRAKDFLTDL…GGMKRFLLEI (209 aa). Threonine 620 carries the post-translational modification Phosphothreonine. Position 663 is a phosphoserine (serine 663). Disordered regions lie at residues 684 to 704, 751 to 782, 803 to 869, 910 to 953, and 1116 to 1139; these read ASSQ…LPNG, ETQS…LSFQ, SLEN…GQAQ, EPVQ…SATM, and NGIS…NSSC. Polar residues-rich tracts occupy residues 751–760 and 803–818; these read ETQSTPQSAP and SLEN…QSNS. Positions 833-855 are enriched in basic and acidic residues; sequence DFTKRSTQSEDFSRRHTVPDRHI. At serine 864 the chain carries Phosphoserine. Positions 916 to 928 are enriched in low complexity; sequence SRSRQQSSSSRES.

Interacts with PEAK1.

Its function is as follows. Inhibitory regulator of the Ras-cyclic AMP pathway. This is Ras GTPase-activating protein nGAP (RASAL2) from Homo sapiens (Human).